The sequence spans 493 residues: Exosome complex component Rrp41 (493 aa).

Disordered regions lie at residues 244-264 and 291-493; these read VSEE…PSPV and LASE…EKDE. Residues 249-259 show a composition bias toward basic and acidic residues; the sequence is APEKGAEKEVL. Positions 297-377 are enriched in acidic residues; that stretch reads PDFEDELEEE…ALEEETELEA (81 aa). Residues 383-400 show a composition bias toward basic and acidic residues; sequence PELKEFDEIEARLEKEDA. The span at 401-471 shows a compositional bias: acidic residues; it reads SIEAEEEIEP…EAEEEPEEEK (71 aa). The segment covering 472–493 has biased composition (basic and acidic residues); the sequence is SEGPWKVVKDPSEAGTRGEKDE.

This sequence belongs to the RNase PH family. Rrp41 subfamily. In terms of assembly, component of the archaeal exosome complex. Forms a hexameric ring-like arrangement composed of 3 Rrp41-Rrp42 heterodimers. The hexameric ring associates with a trimer of Rrp4 and/or Csl4 subunits.

Its subcellular location is the cytoplasm. Catalytic component of the exosome, which is a complex involved in RNA degradation. Has 3'-&gt;5' exoribonuclease activity. Can also synthesize heteromeric RNA-tails. The polypeptide is Exosome complex component Rrp41 (Methanosarcina mazei (strain ATCC BAA-159 / DSM 3647 / Goe1 / Go1 / JCM 11833 / OCM 88) (Methanosarcina frisia)).